A 128-amino-acid chain; its full sequence is MKRREAREKALQALFQIELNEMSLDQAIKNIMEDEQDDYMEKLVEGVMANKAEIDAIIEPNLDNWRMDRLSKVDLSLLRLSVYEIKYLDDVPNRVSLNESIEIAKIYSDEKSSKFINGVLANIAPEDK.

It belongs to the NusB family.

Functionally, involved in transcription antitermination. Required for transcription of ribosomal RNA (rRNA) genes. Binds specifically to the boxA antiterminator sequence of the ribosomal RNA (rrn) operons. The chain is Transcription antitermination protein NusB from Listeria monocytogenes serotype 4b (strain CLIP80459).